The primary structure comprises 320 residues: L-lactate dehydrogenase (320 aa).

Residues V19, D40, R45, and 85 to 86 (GA) contribute to the NAD(+) site. Substrate contacts are provided by Q88 and R94. NAD(+)-binding positions include S107, 124 to 126 (ITN), and S149. 126-129 (NPVD) provides a ligand contact to substrate. Position 154-157 (154-157 (DSAR)) interacts with substrate. Residues R159 and H174 each contribute to the beta-D-fructose 1,6-bisphosphate site. H181 serves as the catalytic Proton acceptor. Phosphotyrosine is present on Y228. Residue T237 participates in substrate binding.

This sequence belongs to the LDH/MDH superfamily. LDH family. As to quaternary structure, homotetramer.

The protein resides in the cytoplasm. It carries out the reaction (S)-lactate + NAD(+) = pyruvate + NADH + H(+). The protein operates within fermentation; pyruvate fermentation to lactate; (S)-lactate from pyruvate: step 1/1. With respect to regulation, allosterically activated by fructose 1,6-bisphosphate (FBP). Its function is as follows. Catalyzes the conversion of lactate to pyruvate. This is L-lactate dehydrogenase from Bifidobacterium animalis subsp. lactis (strain AD011).